A 418-amino-acid polypeptide reads, in one-letter code: Elongation factor 1-gamma 2 (418 aa).

The 82-residue stretch at 1–82 (MALVLHAGSG…YVTRSKADNP (82 aa)) folds into the GST N-terminal domain. Positions 87–215 (SLIEYAHIEQ…VKQAESVPPV (129 aa)) constitute a GST C-terminal domain. Residues 210–265 (ESVPPVQKKAPPPKEQKPKEAKKEAPKEAPKPKAVEKPEEEEEAPKPKPKNPLDLL) form a disordered region. Over residues 221-246 (PPKEQKPKEAKKEAPKEAPKPKAVEK) the composition is skewed to basic and acidic residues. In terms of domain architecture, EF-1-gamma C-terminal spans 258–418 (PKNPLDLLPP…ESLLDAKCFK (161 aa)).

As to quaternary structure, EF-1 is composed of four subunits: alpha, beta, delta, and gamma.

Functionally, probably plays a role in anchoring the complex to other cellular components. The sequence is that of Elongation factor 1-gamma 2 from Oryza sativa subsp. japonica (Rice).